The sequence spans 319 residues: Malate dehydrogenase (319 aa).

Residues 7–13 and aspartate 34 each bind NAD(+); that span reads GAAGGIG. Residues arginine 81 and arginine 87 each contribute to the substrate site. NAD(+) is bound by residues asparagine 94 and 117–119; that span reads ITN. Positions 119 and 153 each coordinate substrate. The active-site Proton acceptor is the histidine 177. Position 227 (methionine 227) interacts with NAD(+).

This sequence belongs to the LDH/MDH superfamily. MDH type 1 family. Homodimer.

The catalysed reaction is (S)-malate + NAD(+) = oxaloacetate + NADH + H(+). Catalyzes the reversible oxidation of malate to oxaloacetate. The chain is Malate dehydrogenase from Psychromonas ingrahamii (strain DSM 17664 / CCUG 51855 / 37).